The following is a 147-amino-acid chain: Hemoglobin subunit beta (147 aa).

The residue at position 2 (Val2) is an N-acetylvaline. The 145-residue stretch at 3-147 (HLTGDEKAAV…VANALAHKYH (145 aa)) folds into the Globin domain. At Thr13 the chain carries Phosphothreonine. Ser45 carries the phosphoserine modification. Lys60 carries the post-translational modification N6-acetyllysine. Residue His64 coordinates heme b. N6-acetyllysine is present on Lys83. Position 93 (His93) interacts with heme b. At Cys94 the chain carries S-nitrosocysteine. The residue at position 145 (Lys145) is an N6-acetyllysine.

Belongs to the globin family. Heterotetramer of two alpha chains and two beta chains. Red blood cells.

Functionally, involved in oxygen transport from the lung to the various peripheral tissues. This chain is Hemoglobin subunit beta (HBB), found in Saimiri sciureus (Common squirrel monkey).